Here is a 307-residue protein sequence, read N- to C-terminus: Cyclin-dependent kinase 5 activator 1 (307 aa).

G2 carries N-myristoyl glycine lipidation. The residue at position 8 (S8) is a Phosphoserine; by CDK5. A disordered region spans residues 97–133; sequence TFAQPPPAQPPAPPASQLSGSQTGVSSSVKKAPHPAI. Positions 100–110 are enriched in pro residues; sequence QPPPAQPPAPP. Residues 112-125 show a composition bias toward polar residues; that stretch reads SQLSGSQTGVSSSV. T138 is modified (phosphothreonine; by CDK5).

This sequence belongs to the cyclin-dependent kinase 5 activator family. Heterodimer composed of a catalytic subunit CDK5 and a regulatory subunit CDK5R1 (p25) and macromolecular complex composed of at least CDK5, CDK5R1 (p35) and CDK5RAP1 or CDK5RAP2 or CDK5RAP3. Only the heterodimer shows kinase activity. Interacts with EPHA4 and NGEF; may mediate the activation of NGEF by EPHA4. Interacts with RASGRF2. The complex p35/CDK5 interacts with CLOCK. Post-translationally, the p35 form is proteolytically cleaved by calpain, giving rise to the p25 form. P35 has a 5 to 10 fold shorter half-life compared to p25. The conversion results in deregulation of the CDK5 kinase: p25/CDK5 kinase displays an increased and altered tau phosphorylation in comparison to the p35/CDK5 kinase in vivo. In terms of processing, myristoylated. A proper myristoylation signal is essential for the proper distribution of p35. Phosphorylation at Ser-8 and Thr-138 by CDK5 prevents calpain-mediated proteolysis. Post-translationally, ubiquitinated, leading to its degradation: degradation of p35 by proteasome results in down-regulation of CDK5 activity. During this process, CDK5 phosphorylates p35 and induces its ubiquitination and subsequent degradation. Ubiquitinated by the CRL2(FEM1B) complex, which recognizes the -Gly-Leu-Asp-Arg C-degron at the C-terminus, leading to its degradation. As to expression, brain and neuron specific.

Its subcellular location is the cell membrane. It localises to the cell projection. It is found in the neuron projection. The protein localises to the nucleus. The protein resides in the cytoplasm. Its subcellular location is the perinuclear region. It localises to the perikaryon. In terms of biological role, p35 is a neuron specific activator of CDK5. The complex p35/CDK5 is required for neurite outgrowth and cortical lamination. Involved in dendritic spine morphogenesis by mediating the EFNA1-EPHA4 signaling. Activator of TPKII. The complex p35/CDK5 participates in the regulation of the circadian clock by modulating the function of CLOCK protein: phosphorylates CLOCK at 'Thr-451' and 'Thr-461' and regulates the transcriptional activity of the CLOCK-BMAL1 heterodimer in association with altered stability and subcellular distribution. The chain is Cyclin-dependent kinase 5 activator 1 (Cdk5r1) from Rattus norvegicus (Rat).